An 83-amino-acid chain; its full sequence is Parvalbumin beta 3 (83 aa).

EF-hand domains follow at residues 13–48 (KSND…FSAG) and 52–83 (LTAG…LVKA). Ca(2+) is bound by residues D26, D28, S30, F32, E34, E37, D65, D67, D69, M71, and E76.

It belongs to the parvalbumin family.

In terms of biological role, in muscle, parvalbumin is thought to be involved in relaxation after contraction. It binds two calcium ions. The sequence is that of Parvalbumin beta 3 from Macruronus novaezelandiae (Blue grenadier).